The following is a 37-amino-acid chain: Large ribosomal subunit protein bL36c (37 aa).

Belongs to the bacterial ribosomal protein bL36 family.

The protein resides in the plastid. It localises to the chloroplast. The protein is Large ribosomal subunit protein bL36c of Phaseolus angularis (Azuki bean).